Consider the following 386-residue polypeptide: Coproporphyrinogen-III oxidase 1, chloroplastic (386 aa).

The transit peptide at 1 to 48 (MASHSSTLLSSPTFAPFSSHRLHYSPNPSTLRFSRPIRNKPNLALRCS) directs the protein to the chloroplast. The interval 125 to 134 (VLQDGNVFEK) is important for dimerization. Ser-174 serves as a coordination point for substrate. The active-site Proton donor is the His-188. Substrate contacts are provided by residues 190-192 (NYR) and 344-349 (GGRIES). Residues 326–361 (YVEFNLVYDRGTTFGLKTGGRIESILVSLPLSARWE) are important for dimerization.

Belongs to the aerobic coproporphyrinogen-III oxidase family. Homodimer. In terms of tissue distribution, expressed in cotyledons, leaves and roots.

It localises to the plastid. The protein resides in the chloroplast. It catalyses the reaction coproporphyrinogen III + O2 + 2 H(+) = protoporphyrinogen IX + 2 CO2 + 2 H2O. It participates in porphyrin-containing compound metabolism; protoporphyrin-IX biosynthesis; protoporphyrinogen-IX from coproporphyrinogen-III (O2 route): step 1/1. Its pathway is porphyrin-containing compound metabolism; chlorophyll biosynthesis. Its function is as follows. Key enzyme in heme biosynthesis. Catalyzes the oxidative decarboxylation of propionic acid side chains of rings A and B of coproporphyrinogen III. This chain is Coproporphyrinogen-III oxidase 1, chloroplastic (CPX1), found in Arabidopsis thaliana (Mouse-ear cress).